A 314-amino-acid polypeptide reads, in one-letter code: Ribosomal RNA small subunit methyltransferase H (314 aa).

Residues 35–37, Asp-55, Phe-79, Asp-101, and Gln-108 contribute to the S-adenosyl-L-methionine site; that span reads GGH.

Belongs to the methyltransferase superfamily. RsmH family.

It localises to the cytoplasm. It catalyses the reaction cytidine(1402) in 16S rRNA + S-adenosyl-L-methionine = N(4)-methylcytidine(1402) in 16S rRNA + S-adenosyl-L-homocysteine + H(+). Its function is as follows. Specifically methylates the N4 position of cytidine in position 1402 (C1402) of 16S rRNA. This is Ribosomal RNA small subunit methyltransferase H from Pectobacterium carotovorum subsp. carotovorum (strain PC1).